Here is a 409-residue protein sequence, read N- to C-terminus: Transcription termination factor 3, mitochondrial (409 aa).

Residues 1–64 (MALLAQQLSR…KTDRALFSWS (64 aa)) constitute a mitochondrion transit peptide. Positions 74–93 (RKSSTNSTLLPSVSEQPEKI) are disordered.

This sequence belongs to the mTERF family.

Its subcellular location is the mitochondrion. Its function is as follows. Binds promoter DNA and regulates initiation of transcription. Required for normal mitochondrial transcription and translation, and for normal assembly of mitochondrial respiratory complexes. Required for normal mitochondrial function. Maintains 16S rRNA levels and functions in mitochondrial ribosome assembly by regulating the biogenesis of the 39S ribosomal subunit. The sequence is that of Transcription termination factor 3, mitochondrial (Mterf3) from Rattus norvegicus (Rat).